Reading from the N-terminus, the 79-residue chain is Putative membrane protein insertion efficiency factor (79 aa).

Belongs to the UPF0161 family.

Its subcellular location is the cell inner membrane. Functionally, could be involved in insertion of integral membrane proteins into the membrane. This Rippkaea orientalis (strain PCC 8801 / RF-1) (Cyanothece sp. (strain PCC 8801)) protein is Putative membrane protein insertion efficiency factor.